The chain runs to 394 residues: MSGEDEQQEQTIAEDLVVTKYKMGGDIANRVLRSLVEASSSGVSVLSLCEKGDAMIMEETGKIFKKEKEMKKGIAFPTSISVNNCVCHFSPLKSDQDYILKEGDLVKIDLGVHVDGFIANVAHTFVVDVAQGTQVTGRKADVIKAAHLCAEAALRLVKPGNQNTQVTEAWNKVAHSFNCTPIEGMLSHQLKQHVIDGEKTIIQNPTDQQKKDHEKAEFEVHEVYAVDVLVSSGEGKAKDAGQRTTIYKRDPSKQYGLKMKTSRAFFSEVERRFDAMPFTLRAFEDEKKARMGVVECAKHELLQPFNVLYEKEGEFVAQFKFTVLLMPNGPMRITSGPFEPDLYKSEMEVQDAELKALLQSSASRKTQKKKKKKASKTAENATSGETLEENEAGD.

S2 carries the post-translational modification N-acetylserine. S2 is modified (phosphoserine). The segment at 2–48 is necessary for nucleolar localization; that stretch reads SGEDEQQEQTIAEDLVVTKYKMGGDIANRVLRSLVEASSSGVSVLSL. The RNA-binding stretch occupies residues 46 to 54; sequence LSLCEKGDA. A Glycyl lysine isopeptide (Lys-Gly) (interchain with G-Cter in SUMO2) cross-link involves residue K298. Residues 301–394 are necessary for nucleolar localization; that stretch reads LLQPFNVLYE…ETLEENEAGD (94 aa). Position 335 is a phosphoserine (S335). The interval 358–394 is disordered; that stretch reads LQSSASRKTQKKKKKKASKTAENATSGETLEENEAGD. S361 carries the post-translational modification Phosphoserine; by PKC/PRKCD. Residues 361–375 are interaction with RNA; it reads SASRKTQKKKKKKAS. Positions 365-375 are enriched in basic residues; that stretch reads KTQKKKKKKAS. Phosphothreonine occurs at positions 366 and 386.

Belongs to the peptidase M24 family. As to quaternary structure, isoform 2 interacts with the cytoplasmic domain of non-phosphorylated ERBB3; the interaction requires PKC activity. Interacts with AR. Treatment with HRG leads to dissociation from ERBB3 and increases association with AR. Interacts with NCL/nucleolin. Component of a ribonucleoprotein complex containing at least PA2G4, NCL, TOP1, PABPC2, RPLP0, acetylated histone H1 (HIST1H1A or H1F1), histone H1 2/4, RPL4, RPL8, RPL15, RPL18, RPL18A, RPL21, RPL11, RPL12, RPL28, RPL27, RPLP2 and RPL24. Interacts with HDAC2. Interacts with RB1; the interaction is enhanced upon PA2G4 dephosphorylation. Interacts with AKT1. Isoform 1 and isoform 2 interact with RNF20. Isoform 2 interacts with HUWE1. Interacts with DNAJC21. Phosphorylated on serine and threonine residues. Phosphorylation is enhanced by HRG treatment. Basal phosphorylation is PKC-dependent and HRG-induced phosphorylation is predominantly PKC-independent. Phosphorylation at Ser-361 by PKC/PRKCD regulates its nucleolar localization. Post-translationally, in cancer cells, isoform 2 is polyubiquitinated leading to its proteasomal degradation and phosphorylation by PKC/PRKCD enhances polyubiquitination. Isoform 2 is undetectable whereas isoform 1 is strongly expressed in cancer cells (at protein level). Isoform 1 and isoform 2 are widely expressed, including heart, brain, lung, pancreas, skeletal muscle, kidney, placenta and liver.

The protein localises to the cytoplasm. Its subcellular location is the nucleus. It localises to the nucleolus. Its function is as follows. May play a role in a ERBB3-regulated signal transduction pathway. Seems be involved in growth regulation. Acts a corepressor of the androgen receptor (AR) and is regulated by the ERBB3 ligand neuregulin-1/heregulin (HRG). Inhibits transcription of some E2F1-regulated promoters, probably by recruiting histone acetylase (HAT) activity. Binds RNA. Associates with 28S, 18S and 5.8S mature rRNAs, several rRNA precursors and probably U3 small nucleolar RNA. May be involved in regulation of intermediate and late steps of rRNA processing. May be involved in ribosome assembly. Mediates cap-independent translation of specific viral IRESs (internal ribosomal entry site). Regulates cell proliferation, differentiation, and survival. Isoform 1 suppresses apoptosis whereas isoform 2 promotes cell differentiation. This Homo sapiens (Human) protein is Proliferation-associated protein 2G4 (PA2G4).